Here is a 158-residue protein sequence, read N- to C-terminus: SsrA-binding protein (158 aa).

It belongs to the SmpB family.

It is found in the cytoplasm. In terms of biological role, required for rescue of stalled ribosomes mediated by trans-translation. Binds to transfer-messenger RNA (tmRNA), required for stable association of tmRNA with ribosomes. tmRNA and SmpB together mimic tRNA shape, replacing the anticodon stem-loop with SmpB. tmRNA is encoded by the ssrA gene; the 2 termini fold to resemble tRNA(Ala) and it encodes a 'tag peptide', a short internal open reading frame. During trans-translation Ala-aminoacylated tmRNA acts like a tRNA, entering the A-site of stalled ribosomes, displacing the stalled mRNA. The ribosome then switches to translate the ORF on the tmRNA; the nascent peptide is terminated with the 'tag peptide' encoded by the tmRNA and targeted for degradation. The ribosome is freed to recommence translation, which seems to be the essential function of trans-translation. The polypeptide is SsrA-binding protein (Acinetobacter baumannii (strain AB307-0294)).